We begin with the raw amino-acid sequence, 109 residues long: Large ribosomal subunit protein eL30 (109 aa).

It belongs to the eukaryotic ribosomal protein eL30 family. As to quaternary structure, component of the large ribosomal subunit (LSU). Mature N.crassa ribosomes consist of a small (40S) and a large (60S) subunit. The 40S small subunit contains 1 molecule of ribosomal RNA (18S rRNA) and at least 32 different proteins. The large 60S subunit contains 3 rRNA molecules (26S, 5.8S and 5S rRNA) and at least 42 different proteins.

It localises to the cytoplasm. Its function is as follows. Component of the ribosome, a large ribonucleoprotein complex responsible for the synthesis of proteins in the cell. The small ribosomal subunit (SSU) binds messenger RNAs (mRNAs) and translates the encoded message by selecting cognate aminoacyl-transfer RNA (tRNA) molecules. The large subunit (LSU) contains the ribosomal catalytic site termed the peptidyl transferase center (PTC), which catalyzes the formation of peptide bonds, thereby polymerizing the amino acids delivered by tRNAs into a polypeptide chain. The nascent polypeptides leave the ribosome through a tunnel in the LSU and interact with protein factors that function in enzymatic processing, targeting, and the membrane insertion of nascent chains at the exit of the ribosomal tunnel. The polypeptide is Large ribosomal subunit protein eL30 (rpl-30) (Neurospora crassa (strain ATCC 24698 / 74-OR23-1A / CBS 708.71 / DSM 1257 / FGSC 987)).